The primary structure comprises 223 residues: Adenylate kinase 4, mitochondrial (223 aa).

Position 15-20 (Gly-15–Thr-20) interacts with a ribonucleoside 5'-triphosphate. The segment at Ser-35–Val-64 is NMP. AMP contacts are provided by Ser-36 and Arg-41. N6-succinyllysine is present on Lys-60. AMP is bound by residues Leu-62–Val-64, Gly-89–Arg-92, and Gln-96. Residues Arg-125–Asp-162 are LID. A ribonucleoside 5'-triphosphate-binding positions include Arg-126 and Val-135–Tyr-136. Residue Arg-170 participates in AMP binding. The residue at position 175 (Lys-175) is an N6-acetyllysine. N6-acetyllysine; alternate is present on residues Lys-179 and Lys-186. 2 positions are modified to N6-succinyllysine; alternate: Lys-179 and Lys-186. Residue Thr-199 coordinates a ribonucleoside 5'-triphosphate.

The protein belongs to the adenylate kinase family. AK3 subfamily. As to quaternary structure, monomer. Interacts with SLC25A5/ANT2.

The protein localises to the mitochondrion matrix. It carries out the reaction a ribonucleoside 5'-phosphate + ATP = a ribonucleoside 5'-diphosphate + ADP. It catalyses the reaction AMP + ATP = 2 ADP. The enzyme catalyses GTP + AMP = GDP + ADP. The catalysed reaction is CMP + ATP = CDP + ADP. It carries out the reaction GTP + CMP = CDP + GDP. It catalyses the reaction dAMP + ATP = dADP + ADP. The enzyme catalyses dCMP + ATP = dCDP + ADP. The catalysed reaction is a 2'-deoxyribonucleoside 5'-diphosphate + ATP = a 2'-deoxyribonucleoside 5'-triphosphate + ADP. It carries out the reaction a ribonucleoside 5'-diphosphate + ATP = a ribonucleoside 5'-triphosphate + ADP. It catalyses the reaction GDP + ATP = GTP + ADP. The enzyme catalyses CDP + GTP = CTP + GDP. The catalysed reaction is CDP + ATP = CTP + ADP. It carries out the reaction UDP + ATP = UTP + ADP. It catalyses the reaction GTP + UDP = UTP + GDP. The enzyme catalyses dADP + GTP = dATP + GDP. The catalysed reaction is dCDP + GTP = dCTP + GDP. It carries out the reaction dCDP + ATP = dCTP + ADP. It catalyses the reaction dGDP + ATP = dGTP + ADP. The enzyme catalyses dTDP + GTP = dTTP + GDP. The catalysed reaction is dTDP + ATP = dTTP + ADP. In terms of biological role, broad-specificity mitochondrial nucleoside phosphate kinase involved in cellular nucleotide homeostasis by catalyzing nucleoside-phosphate interconversions. Similar to other adenylate kinases, preferentially catalyzes the phosphorylation of the nucleoside monophosphate AMP with ATP as phosphate donor to produce ADP. Phosphorylates only AMP when using GTP as phosphate donor. In vitro, can also catalyze the phosphorylation of CMP, dAMP and dCMP and use GTP as an alternate phosphate donor. Moreover, exhibits a diphosphate kinase activity, producing ATP, CTP, GTP, UTP, TTP, dATP, dCTP and dGTP from the corresponding diphosphate substrates with either ATP or GTP as phosphate donors. Plays a role in controlling cellular ATP levels by regulating phosphorylation and activation of the energy sensor protein kinase AMPK. Plays a protective role in the cellular response to oxidative stress. The sequence is that of Adenylate kinase 4, mitochondrial from Bos taurus (Bovine).